The sequence spans 218 residues: Hypoxanthine-guanine phosphoribosyltransferase (218 aa).

GMP is bound by residues K69, 134–142, K166, 186–188, and D194; these read EDIIDTGKT and KFV. D138 (proton acceptor) is an active-site residue. Residue D194 coordinates Mg(2+).

The protein belongs to the purine/pyrimidine phosphoribosyltransferase family. Homotetramer. Requires Mg(2+) as cofactor.

It is found in the cytoplasm. It catalyses the reaction IMP + diphosphate = hypoxanthine + 5-phospho-alpha-D-ribose 1-diphosphate. It carries out the reaction GMP + diphosphate = guanine + 5-phospho-alpha-D-ribose 1-diphosphate. The protein operates within purine metabolism; IMP biosynthesis via salvage pathway; IMP from hypoxanthine: step 1/1. Its function is as follows. Converts guanine to guanosine monophosphate, and hypoxanthine to inosine monophosphate. Transfers the 5-phosphoribosyl group from 5-phosphoribosylpyrophosphate onto the purine. Plays a central role in the generation of purine nucleotides through the purine salvage pathway. This Gallus gallus (Chicken) protein is Hypoxanthine-guanine phosphoribosyltransferase (HPRT1).